The following is a 470-amino-acid chain: Cysteine--tRNA ligase (470 aa).

Cysteine 28 contacts Zn(2+). A 'HIGH' region motif is present at residues proline 30–asparagine 40. Positions 212, 237, and 241 each coordinate Zn(2+). The 'KMSKS' region motif lies at lysine 271–serine 275. Lysine 274 contacts ATP.

It belongs to the class-I aminoacyl-tRNA synthetase family. Monomer. Zn(2+) serves as cofactor.

The protein resides in the cytoplasm. It catalyses the reaction tRNA(Cys) + L-cysteine + ATP = L-cysteinyl-tRNA(Cys) + AMP + diphosphate. In Levilactobacillus brevis (strain ATCC 367 / BCRC 12310 / CIP 105137 / JCM 1170 / LMG 11437 / NCIMB 947 / NCTC 947) (Lactobacillus brevis), this protein is Cysteine--tRNA ligase.